A 63-amino-acid chain; its full sequence is Putative conjugal transfer lipoprotein XF_a0011.1 (63 aa).

A signal peptide spans 1-15 (MRYTFGIVTVYLLAG). Cys-16 is lipidated: N-palmitoyl cysteine. Residue Cys-16 is the site of S-diacylglycerol cysteine attachment.

It to B.suis ORF12 in VirB region.

It is found in the cell inner membrane. The protein is Putative conjugal transfer lipoprotein XF_a0011.1 of Xylella fastidiosa (strain 9a5c).